Reading from the N-terminus, the 345-residue chain is S-adenosylmethionine:tRNA ribosyltransferase-isomerase (345 aa).

It belongs to the QueA family. Monomer.

The protein resides in the cytoplasm. It catalyses the reaction 7-aminomethyl-7-carbaguanosine(34) in tRNA + S-adenosyl-L-methionine = epoxyqueuosine(34) in tRNA + adenine + L-methionine + 2 H(+). Its pathway is tRNA modification; tRNA-queuosine biosynthesis. Transfers and isomerizes the ribose moiety from AdoMet to the 7-aminomethyl group of 7-deazaguanine (preQ1-tRNA) to give epoxyqueuosine (oQ-tRNA). The protein is S-adenosylmethionine:tRNA ribosyltransferase-isomerase of Acinetobacter baumannii (strain AB0057).